Reading from the N-terminus, the 498-residue chain is MRTNPTTSRPGVSTIEEKSTGRIDQIIGPVLDVTFPPGKLPYIYNALVVKSRDTDGKQINVTCEVQQLLGNNRVRAVAMSATDGLMRGMEVIDTGAPLSVPVGGATLGRIFNVLGEPVDNLGPVDTSATFPIHRSAPAFIELDTKLSIFETGIKVVDLLAPYRRGGKIGLFGGAGVGKTVLIMELINNIAKAHGGVSVFGGVGERTREGNDLYMEMKESGVINEKNLEESKVALVYGQMNEPPGARMRVGLTALTMAEYFRDVNKQDVLLFIDNIFRFVQAGSEVSALLGRMPSAVGYQPTLSTEMGSLQERITSTKKGSITSIQAVYVPADDLTDPAPATTFAHLDATTVLSRGLASKGIYPAVDPLDSTSTMLQPRIVGNEHYETAQRVKQTLQRYKELQDIIAILGLDELSEEDRLTVARARKIERFLSQPFFVAEVFTGSPGKYVGLAETIRGFQLILSGELDGLPEQAFYLVGNIDEASTKAINLEEENKLKK.

172 to 179 (GGAGVGKT) is a binding site for ATP.

The protein belongs to the ATPase alpha/beta chains family. As to quaternary structure, F-type ATPases have 2 components, CF(1) - the catalytic core - and CF(0) - the membrane proton channel. CF(1) has five subunits: alpha(3), beta(3), gamma(1), delta(1), epsilon(1). CF(0) has four main subunits: a(1), b(1), b'(1) and c(9-12).

The protein resides in the plastid. It localises to the chloroplast thylakoid membrane. The enzyme catalyses ATP + H2O + 4 H(+)(in) = ADP + phosphate + 5 H(+)(out). Produces ATP from ADP in the presence of a proton gradient across the membrane. The catalytic sites are hosted primarily by the beta subunits. This Oryza nivara (Indian wild rice) protein is ATP synthase subunit beta, chloroplastic.